Here is a 362-residue protein sequence, read N- to C-terminus: Neutral protease 2 homolog MEP2 (362 aa).

An N-terminal signal peptide occupies residues Met1–Ser19. Positions Leu20–Arg177 are excised as a propeptide. Disulfide bonds link Cys184/Cys255 and Cys262/Cys280. Position 304 (His304) interacts with Zn(2+). Residue Glu305 is part of the active site. The Zn(2+) site is built by His308 and Asp319.

Belongs to the peptidase M35 family. It depends on Zn(2+) as a cofactor.

It is found in the secreted. It catalyses the reaction Preferential cleavage of bonds with hydrophobic residues in P1'. Also 3-Asn-|-Gln-4 and 8-Gly-|-Ser-9 bonds in insulin B chain.. In terms of biological role, secreted metalloproteinase that allows assimilation of proteinaceous substrates. Shows high activities on basic nuclear substrates such as histone and protamine. May be involved in virulence. The protein is Neutral protease 2 homolog MEP2 (MEP2) of Coccidioides posadasii (strain C735) (Valley fever fungus).